Here is a 168-residue protein sequence, read N- to C-terminus: Ribosome maturation factor RimP (168 aa).

This sequence belongs to the RimP family.

The protein resides in the cytoplasm. In terms of biological role, required for maturation of 30S ribosomal subunits. This is Ribosome maturation factor RimP from Bordetella bronchiseptica (strain ATCC BAA-588 / NCTC 13252 / RB50) (Alcaligenes bronchisepticus).